The chain runs to 157 residues: Endoribonuclease YbeY (157 aa).

Zn(2+) is bound by residues H114, H118, and H124.

Belongs to the endoribonuclease YbeY family. It depends on Zn(2+) as a cofactor.

It is found in the cytoplasm. Its function is as follows. Single strand-specific metallo-endoribonuclease involved in late-stage 70S ribosome quality control and in maturation of the 3' terminus of the 16S rRNA. The protein is Endoribonuclease YbeY of Serratia proteamaculans (strain 568).